Consider the following 186-residue polypeptide: Small ribosomal subunit protein uS19 (186 aa).

The unknown stretch occupies residues 1–95; the sequence is MREAIKRYGS…YEELYAQYKQ (95 aa). The interval 96-186 is small ribosomal subunit protein uS19; it reads MTEKKAYVDP…EKTAKVVKKK (91 aa).

It belongs to the universal ribosomal protein uS19 family.

Functionally, protein S19 forms a complex with S13 that binds strongly to the 16S ribosomal RNA. This is Small ribosomal subunit protein uS19 from Aquifex aeolicus (strain VF5).